We begin with the raw amino-acid sequence, 838 residues long: Adenylate cyclase (838 aa).

The segment at 1-541 is catalytic; the sequence is MNYDLFSAQK…DLRLSFPVTV (541 aa). The tract at residues 547-838 is regulatory; it reads EDLTHACEIR…VPFHSRLAMS (292 aa).

Belongs to the adenylyl cyclase class-1 family.

Its subcellular location is the cytoplasm. The enzyme catalyses ATP = 3',5'-cyclic AMP + diphosphate. This chain is Adenylate cyclase (cya), found in Pasteurella multocida (strain Pm70).